Consider the following 220-residue polypeptide: Large ribosomal subunit protein uL3 (220 aa).

The tract at residues S132 to Q153 is disordered. Polar residues predominate over residues G133 to V145. Q153 is modified (N5-methylglutamine).

It belongs to the universal ribosomal protein uL3 family. As to quaternary structure, part of the 50S ribosomal subunit. Forms a cluster with proteins L14 and L19. Post-translationally, methylated by PrmB.

In terms of biological role, one of the primary rRNA binding proteins, it binds directly near the 3'-end of the 23S rRNA, where it nucleates assembly of the 50S subunit. This chain is Large ribosomal subunit protein uL3, found in Ralstonia nicotianae (strain ATCC BAA-1114 / GMI1000) (Ralstonia solanacearum).